A 259-amino-acid polypeptide reads, in one-letter code: HTH-type transcriptional regulator TtgV (259 aa).

The HTH iclR-type domain occupies 14-76 (IQVIARAASI…GPAGGFRLGP (63 aa)). A DNA-binding region (H-T-H motif) is located at residues 36 to 59 (LAAIAQLVGLPRSTVQRIINALEE). Residues 89 to 253 (ILSLVKPYLR…KLNIERAIGR (165 aa)) enclose the IclR-ED domain.

Its function is as follows. Represses the expression of the ttgGHI and ttgVW operons. Binds to the ttgGHI / ttgVW intergenic region, probably preventing binding of RNA polymerase; ttgV dissociates from this region in the presence of 1-hexanol. This Pseudomonas putida (strain DOT-T1E) protein is HTH-type transcriptional regulator TtgV (ttgV).